Consider the following 1023-residue polypeptide: 1-phosphatidylinositol 4,5-bisphosphate phosphodiesterase beta-4 (1023 aa).

The region spanning 149 to 299 is the PI-PLC X-box domain; that stretch reads QEMDHPLAHY…LKRKILIKKQ (151 aa). Catalysis depends on residues histidine 164 and histidine 211. Residues 413-529 enclose the PI-PLC Y-box domain; sequence LSTMINYAQP…GYLLKPDFMR (117 aa). Residues 532 to 657 enclose the C2 domain; the sequence is DRTFDPFSET…SLRNEGNKPL (126 aa). Disordered regions lie at residues 711-742 and 930-958; these read ADVPSDTSKNDKKGKANTAKANVTPQSSSELR and KISMENSKAISQDKSIKNKAERERRVREL. Polar residues-rich tracts occupy residues 729–742 and 933–942; these read AKANVTPQSSSELR and MENSKAISQD. The residue at position 734 (threonine 734) is a Phosphothreonine. Residues 943-957 show a composition bias toward basic and acidic residues; that stretch reads KSIKNKAERERRVRE.

Ca(2+) is required as a cofactor. In terms of processing, the N-terminus is blocked. Preferentially expressed in the retina.

The protein localises to the cell membrane. It carries out the reaction a 1,2-diacyl-sn-glycero-3-phospho-(1D-myo-inositol-4,5-bisphosphate) + H2O = 1D-myo-inositol 1,4,5-trisphosphate + a 1,2-diacyl-sn-glycerol + H(+). The enzyme catalyses a 1,2-diacyl-sn-glycero-3-phospho-(1D-myo-inositol) + H2O = 1D-myo-inositol 1-phosphate + a 1,2-diacyl-sn-glycerol + H(+). Activated phosphatidylinositol-specific phospholipase C enzymes catalyze the production of the second messenger molecules diacylglycerol (DAG) and inositol 1,4,5-trisphosphate (IP3) involved in G-protein coupled receptor signaling pathways. PLCB4 is a direct effector of the endothelin receptor signaling pathway that plays an essential role in lower jaw and middle ear structures development. This Bos taurus (Bovine) protein is 1-phosphatidylinositol 4,5-bisphosphate phosphodiesterase beta-4 (PLCB4).